Reading from the N-terminus, the 271-residue chain is MRDRRGPLGTCLAQVQWAGGGDSDKLSYSLKKRMPTEGPWPADAPSWMNKPAVDGNSQSEALSLEMAGLSLPSGGPVLPYVKESARRNPASAATPSAAVGLFPAPTEYFARVSCSGVEALGRDWLGGGPRATHGHRGQCPKGEPRVSRLTRHQKLPEMGSFWDDPPSAFPSGLGSELEPSCLHSILSATLHACPEVLLKDETKRIFLDLLNPMFSKQTIEFKKMFKSTSDGLQITLGLLALQHFELANSLCHSLKYKQNNASRLILRVVLE.

This is Putative protein FAM220BP (FAM220BP) from Homo sapiens (Human).